The following is a 283-amino-acid chain: Elongation factor Ts (283 aa).

The involved in Mg(2+) ion dislocation from EF-Tu stretch occupies residues 80–83; the sequence is TDFV.

It belongs to the EF-Ts family.

The protein resides in the cytoplasm. Its function is as follows. Associates with the EF-Tu.GDP complex and induces the exchange of GDP to GTP. It remains bound to the aminoacyl-tRNA.EF-Tu.GTP complex up to the GTP hydrolysis stage on the ribosome. The sequence is that of Elongation factor Ts from Actinobacillus succinogenes (strain ATCC 55618 / DSM 22257 / CCUG 43843 / 130Z).